Consider the following 299-residue polypeptide: Glycine--tRNA ligase alpha subunit (299 aa).

The protein belongs to the class-II aminoacyl-tRNA synthetase family. In terms of assembly, tetramer of two alpha and two beta subunits.

It is found in the cytoplasm. It catalyses the reaction tRNA(Gly) + glycine + ATP = glycyl-tRNA(Gly) + AMP + diphosphate. The chain is Glycine--tRNA ligase alpha subunit from Dichelobacter nodosus (strain VCS1703A).